Here is a 469-residue protein sequence, read N- to C-terminus: Gamma-aminobutyric acid permease (469 aa).

At 1–17 the chain is on the cytoplasmic side; sequence MNQSQSGLKKELKTRHM. The chain crosses the membrane as a helical span at residues 18–38; sequence TMISIAGVIGAGLFVGSGSVI. His39 is a topological domain (extracellular). Residues 40–60 traverse the membrane as a helical segment; it reads STGPGAVVSYALAGLLVIFIM. The Cytoplasmic portion of the chain corresponds to 61 to 94; that stretch reads RMLGEMSAVNPTSGSFSQYAHDAIGPWAGFTIGW. A helical membrane pass occupies residues 95–115; it reads LYWFFWVIVIAIEAIAGAGII. Gln116 is a topological domain (extracellular). The chain crosses the membrane as a helical span at residues 117–137; it reads YWFHDIPLWLTSLILTIVLTL. Residues 138–157 lie on the Cytoplasmic side of the membrane; sequence TNVYSVKSFGEFEYWFSLIK. The helical transmembrane segment at 158–178 threads the bilayer; that stretch reads VVTIIAFLIVGFAFIFGFAPG. Over 179 to 200 the chain is Extracellular; sequence SEPVGFSNLTGKGGFFPEGISS. A helical membrane pass occupies residues 201–221; it reads VLLGIVVVIFSFMGTEIVAIA. Over 222-242 the chain is Cytoplasmic; sequence AGETSNPIESVTKATRSVVWR. Residues 243 to 263 form a helical membrane-spanning segment; the sequence is IIVFYVGSIAIVVALLPWNSA. At 264-269 the chain is on the extracellular side; it reads NILESP. Residues 270 to 290 traverse the membrane as a helical segment; it reads FVAVLEHIGVPAAAQIMNFIV. At 291-328 the chain is on the cytoplasmic side; that stretch reads LTAVLSCLNSGLYTTSRMLYSLAERNEAPRRFMKLSKK. Residues 329 to 349 traverse the membrane as a helical segment; it reads GVPVQAIVAGTFFSYIAVVMN. The Extracellular segment spans residues 350-355; it reads YFSPDT. Residues 356–376 form a helical membrane-spanning segment; the sequence is VFLFLVNSSGAIALLVYLVIA. Over 377–401 the chain is Cytoplasmic; it reads VSQLKMRKKLEKTNPEALKIKMWLF. The chain crosses the membrane as a helical span at residues 402-422; that stretch reads PFLTYLTIIAICGILVSMAFI. Topologically, residues 423–425 are extracellular; sequence DSM. The chain crosses the membrane as a helical span at residues 426 to 446; sequence RDELLLTGVITGIVLISYLVF. Residues 447–469 lie on the Cytoplasmic side of the membrane; it reads RKRKVSEKAAANPVTQQQPDILP.

Belongs to the amino acid-polyamine-organocation (APC) superfamily. Amino acid transporter (AAT) (TC 2.A.3.1) family.

The protein localises to the cell membrane. It catalyses the reaction 4-aminobutanoate(in) + H(+)(in) = 4-aminobutanoate(out) + H(+)(out). The enzyme catalyses beta-alanine(in) + H(+)(in) = beta-alanine(out) + H(+)(out). The protein operates within amino-acid degradation; 4-aminobutanoate degradation. Transporter for gamma-aminobutyrate (GABA). Can also transport beta-alanine. Can translocate several open-chain GABA analogs (3-aminobutyrate, 3-aminopropanoate, cis-4-aminobutenoate) across the membrane via counterflow against GABA, but cannot transport muscimol. Also functions as a low-affinity proline importer. In Bacillus subtilis (strain 168), this protein is Gamma-aminobutyric acid permease.